The primary structure comprises 476 residues: E1B 55 kDa protein (476 aa).

Disordered regions lie at residues 1–20 and 42–95; these read MERP…GNGS and FGSS…KMEN. Residues serine 472 and serine 473 each carry the phosphoserine modification.

This sequence belongs to the adenoviridae E1B 55 kDa protein family. Interacts with host PML-4 and PML-5; this interaction promotes efficient subnuclear targeting of E1B-55K to PML nuclear bodies. Interacts with E4-ORF3 protein. Interacts with E4-ORF6 protein.

The protein resides in the host nucleus. It is found in the host cytoplasm. In terms of biological role, plays a major role to prevent cellular inhibition of viral genome replication. Assembles an SCF-like E3 ubiquitin ligase complex based on the cellular proteins ELOB, ELOC, CUL5 and RBX1, in cooperation with viral E4orf6. This viral RING-type ligase ubiquitinates cellular substrates and targets them to proteasomal degradation: TP53/p53, LIG4, MRE11-RAD50-NBS1 (MRN) complex, ITGA3, DAXX and BLM. E1B-55K probably acts as the substrate-specific adapter of the SCF-like E3 ubiquitin ligase complex. Degradation of host TP53/p53 activity is essential for preventing E1A-induced TP53 accumulation that would otherwise lead to cell apoptosis and growth arrest. E1B-55K also inactivates TP53 transcription-factor activity by binding its transactivation domain. E1B-55K also functions as a SUMO1 E3 ligase for TP53 which causes the latter to be sequestered in promyelocytic leukemia (PML) nuclear bodies thereby contributing to maximal inhibition of TP53 function. The protein is E1B 55 kDa protein of Human adenovirus F serotype 40 (HAdV-40).